The following is a 332-amino-acid chain: Transaldolase (332 aa).

K135 functions as the Schiff-base intermediate with substrate in the catalytic mechanism.

It belongs to the transaldolase family. Type 1 subfamily. As to quaternary structure, homodimer.

Its subcellular location is the cytoplasm. It carries out the reaction D-sedoheptulose 7-phosphate + D-glyceraldehyde 3-phosphate = D-erythrose 4-phosphate + beta-D-fructose 6-phosphate. It participates in carbohydrate degradation; pentose phosphate pathway; D-glyceraldehyde 3-phosphate and beta-D-fructose 6-phosphate from D-ribose 5-phosphate and D-xylulose 5-phosphate (non-oxidative stage): step 2/3. Its function is as follows. Transaldolase is important for the balance of metabolites in the pentose-phosphate pathway. In Prochlorococcus marinus (strain NATL1A), this protein is Transaldolase.